Here is a 472-residue protein sequence, read N- to C-terminus: Keratin, type I cytoskeletal 14 (472 aa).

Residues 1 to 114 (MTTCSRQFTS…AGGDGLLVGS (114 aa)) are head. A coil 1A region spans residues 115–150 (EKVTMQNLNDRLASYLDKVRALEEANADLEVKIRDW). Residues 115–426 (EKVTMQNLND…RLLEGEDAHL (312 aa)) form the IF rod domain. Residues 151–168 (YQRQRPAEIKDYSPYFKT) are linker 1. The tract at residues 169–260 (IEDLRNKILT…KNHEEEMNAL (92 aa)) is coil 1B. A linker 12 region spans residues 261–283 (RGQVGGDVNVEMDAAPGVDLSRI). The tract at residues 284–422 (LNEMRDQYEK…ATYRRLLEGE (139 aa)) is coil 2. The tract at residues 423-472 (DAHLSSSQFSSGSQSSRDVTSSSRQIRTKVMDVHDGKVVSTHEQVLRTKN) is tail. The tract at residues 425-472 (HLSSSQFSSGSQSSRDVTSSSRQIRTKVMDVHDGKVVSTHEQVLRTKN) is interaction with Type I keratins and keratin filaments. The segment at 426–472 (LSSSQFSSGSQSSRDVTSSSRQIRTKVMDVHDGKVVSTHEQVLRTKN) is disordered. Low complexity predominate over residues 427 to 445 (SSSQFSSGSQSSRDVTSSS). Ser435 is subject to Phosphoserine.

Belongs to the intermediate filament family. Heterotetramer of two type I and two type II keratins. Forms a disulfide-linked heterodimer (via 2B domains) with KRT5 (via 2B domains). Forms a heterodimer with KRT1; the interaction is more abundant in the absence of KRT5. Interacts with PLEC isoform 1C, when in a heterodimer with KRT5. Interacts with TRADD and with keratin filaments. Associates with other type I keratins. Interacts with EPPK1. Interacts with KLHL24. Interacts with PKP1 (via N-terminus) and PKP2. Post-translationally, a disulfide bond is formed between rather than within filaments and promotes the formation of a keratin filament cage around the nucleus. Ubiquitinated by the BCR(KLHL24) E3 ubiquitin ligase complex. As to expression, expressed in the corneal epithelium (at protein level). Detected in the basal layer, lowered within the more apically located layers specifically in the stratum spinosum, stratum granulosum but is not detected in stratum corneum. Strongly expressed in the outer root sheath of anagen follicles but not in the germinative matrix, inner root sheath or hair. Found in keratinocytes surrounding the club hair during telogen.

It is found in the cytoplasm. The protein resides in the nucleus. In terms of biological role, the nonhelical tail domain is involved in promoting KRT5-KRT14 filaments to self-organize into large bundles and enhances the mechanical properties involved in resilience of keratin intermediate filaments in vitro. This Homo sapiens (Human) protein is Keratin, type I cytoskeletal 14 (KRT14).